Reading from the N-terminus, the 247-residue chain is MADWDDEKFEPGEVPADGVTDKWEGEDEDDDIKESWDDDDEDEKKEDEAKNTEAAAPKKKKTLKQILKEKEEQKLLEEKRKAEEKQKLEEEDKELTPEEQMAEKLRRQKIVEESDLLVAMDTFGVGTQEEASRTGLDSMIPSTKEEFTEYSKLLVEKLTKFETNPEYIPFLEATLREICVSLDPEDIKKLSSTLNMLQSEKLKAQKGKKAKSKATKKATLTGGAKMGRKDEMDYSYGDLGNEYDDFM.

Disordered regions lie at residues 1-64 and 77-101; these read MADW…KTLK and EEKRKAEEKQKLEEEDKELTPEEQM. A compositionally biased stretch (acidic residues) spans 24 to 45; it reads EGEDEDDDIKESWDDDDEDEKK. The stretch at 43-108 forms a coiled coil; the sequence is EKKEDEAKNT…EQMAEKLRRQ (66 aa).

The protein belongs to the eIF-3 subunit J family. Component of the eukaryotic translation initiation factor 3 (eIF-3) complex.

It localises to the cytoplasm. Component of the eukaryotic translation initiation factor 3 (eIF-3) complex, which is involved in protein synthesis of a specialized repertoire of mRNAs and, together with other initiation factors, stimulates binding of mRNA and methionyl-tRNAi to the 40S ribosome. The eIF-3 complex specifically targets and initiates translation of a subset of mRNAs involved in cell proliferation. This is Eukaryotic translation initiation factor 3 subunit J from Nematostella vectensis (Starlet sea anemone).